Here is an 87-residue protein sequence, read N- to C-terminus: Protein WFDC11 (87 aa).

A signal peptide spans 1–25 (MVSLMKLWIPMLMTFFCTVLLSVLG).

The protein localises to the secreted. The polypeptide is Protein WFDC11 (WFDC11) (Homo sapiens (Human)).